The following is a 382-amino-acid chain: Na(+)/H(+) antiporter NhaA (382 aa).

Transmembrane regions (helical) follow at residues I5–W25, F42–I62, L88–I108, G116–F136, F145–Y165, V169–I189, I261–S281, V282–L302, T327–V347, and G353–G373.

The protein belongs to the NhaA Na(+)/H(+) (TC 2.A.33) antiporter family.

It localises to the cell inner membrane. It catalyses the reaction Na(+)(in) + 2 H(+)(out) = Na(+)(out) + 2 H(+)(in). Na(+)/H(+) antiporter that extrudes sodium in exchange for external protons. This is Na(+)/H(+) antiporter NhaA from Geobacter metallireducens (strain ATCC 53774 / DSM 7210 / GS-15).